The chain runs to 435 residues: MSTGFFGDITKIKYEGPDSTNPLAFRHYNPDEVVMGKRMEDHLRFAVAYWHTFVWPGTDPFGGNTFERPWFKDSMEAAKLKADVAFEFFQLLGTPYYCFHDADARPEGASFAENTKNLNEIVDYFAQKQADTGVKLLWGTANMFSHRRYMSGAATNPDPDVFAFAAATVKTCLDATQKLGGENYVLWGGREGYETLLNTDLKQELDHMGRFLNMVVEYKHKIGFKGAILIEPKPQEPSKHQYDYDVATVYGFLKTYGLEKEVKVNIEQGHAILAGHTFEHELALANALGIFGSIDMNRNDYQSGWDTDQFPNNVPEMALAYYQVLQAGGFTSGGTNFDSKLRRQSIDPADLLIGHIGGMDCCARGLKAAAKMVEDKALSGPLANRYAGWNSDGAKAMLASGTLESIAARVEGENINPQPVSGQQELLENVVNRYV.

Mg(2+) contacts are provided by Asp-306 and Asp-308.

It belongs to the xylose isomerase family. As to quaternary structure, homotetramer. It depends on Mg(2+) as a cofactor.

Its subcellular location is the cytoplasm. It carries out the reaction alpha-D-xylose = alpha-D-xylulofuranose. The protein is Xylose isomerase of Allorhizobium ampelinum (strain ATCC BAA-846 / DSM 112012 / S4) (Agrobacterium vitis (strain S4)).